Here is a 210-residue protein sequence, read N- to C-terminus: Cytochrome c biogenesis ATP-binding export protein CcmA (210 aa).

The 205-residue stretch at 4 to 208 folds into the ABC transporter domain; the sequence is VPTLSFSKLG…GAIPAQLLEL (205 aa). Residue 39-46 participates in ATP binding; the sequence is GANGVGKT.

This sequence belongs to the ABC transporter superfamily. CcmA exporter (TC 3.A.1.107) family. The complex is composed of two ATP-binding proteins (CcmA) and two transmembrane proteins (CcmB).

It is found in the cell inner membrane. The catalysed reaction is heme b(in) + ATP + H2O = heme b(out) + ADP + phosphate + H(+). Part of the ABC transporter complex CcmAB involved in the biogenesis of c-type cytochromes; once thought to export heme, this seems not to be the case, but its exact role is uncertain. Responsible for energy coupling to the transport system. The polypeptide is Cytochrome c biogenesis ATP-binding export protein CcmA (Albidiferax ferrireducens (strain ATCC BAA-621 / DSM 15236 / T118) (Rhodoferax ferrireducens)).